The sequence spans 345 residues: Pyruvate dehydrogenase E1 component subunit alpha (345 aa).

In terms of assembly, heterodimer of an alpha and a beta chain. Thiamine diphosphate serves as cofactor.

It catalyses the reaction N(6)-[(R)-lipoyl]-L-lysyl-[protein] + pyruvate + H(+) = N(6)-[(R)-S(8)-acetyldihydrolipoyl]-L-lysyl-[protein] + CO2. Its function is as follows. The pyruvate dehydrogenase complex catalyzes the overall conversion of pyruvate to acetyl-CoA and CO(2). It contains multiple copies of three enzymatic components: pyruvate dehydrogenase (E1), dihydrolipoamide acetyltransferase (E2) and lipoamide dehydrogenase (E3). The sequence is that of Pyruvate dehydrogenase E1 component subunit alpha (pdhA) from Acholeplasma laidlawii.